Here is a 208-residue protein sequence, read N- to C-terminus: MKFSTLKLATCYLYKVAAEAKVAGKEEFVGDSDSNYQNEYLVTRTTGKDTFTPEMTRKMVLENGLAIVRETTTYVNPYEVKFVPGPVLESLDKVAFASERFGAPNKFIPKPDFSYMEGYNKMAKKTGSSNARTPDEGKKAKNAPEEEKVKTSGSEDAKGEESAVEGKEPEQGENDVEVANPTKSSEKAGFFPNGSFARPSFGKYSSLA.

The disordered stretch occupies residues 124 to 208 (KKTGSSNART…PSFGKYSSLA (85 aa)). Residues 133–170 (TPDEGKKAKNAPEEEKVKTSGSEDAKGEESAVEGKEPE) are compositionally biased toward basic and acidic residues.

It localises to the golgi apparatus. This is an uncharacterized protein from Encephalitozoon cuniculi (strain GB-M1) (Microsporidian parasite).